Consider the following 273-residue polypeptide: 2,3,4,5-tetrahydropyridine-2,6-dicarboxylate N-succinyltransferase (273 aa).

Residues Arg104 and Asp141 each coordinate substrate.

This sequence belongs to the transferase hexapeptide repeat family. Homotrimer.

The protein localises to the cytoplasm. It carries out the reaction (S)-2,3,4,5-tetrahydrodipicolinate + succinyl-CoA + H2O = (S)-2-succinylamino-6-oxoheptanedioate + CoA. Its pathway is amino-acid biosynthesis; L-lysine biosynthesis via DAP pathway; LL-2,6-diaminopimelate from (S)-tetrahydrodipicolinate (succinylase route): step 1/3. In Blochmanniella pennsylvanica (strain BPEN), this protein is 2,3,4,5-tetrahydropyridine-2,6-dicarboxylate N-succinyltransferase.